A 997-amino-acid chain; its full sequence is Disease resistance protein RML1A (997 aa).

In terms of domain architecture, TIR spans 12–176 (WRYRVFTSFH…KIARDVSEKL (165 aa)). Glutamate 87 is a catalytic residue. One can recognise an NB-ARC domain in the interval 191-447 (EAHLRKIQSL…HIAIFFNYED (257 aa)). 10 LRR repeats span residues 194–218 (LRKI…GPAG), 534–557 (TSGI…RFLS), 600–623 (AENL…TQLL), 624–647 (TKLK…SNAT), 649–670 (LEML…IKNL), 671–693 (HKLD…NINL), 694–714 (ASLE…PAFS), 715–737 (TKIK…ITHC), 758–781 (PSSL…CIKD), and 783–808 (QRLD…SLRL).

It carries out the reaction NAD(+) + H2O = ADP-D-ribose + nicotinamide + H(+). Functionally, TIR-NB-LRR receptor-like protein that confers resistance to the pathogen Leptosphaeria maculans (blackleg disease). The polypeptide is Disease resistance protein RML1A (Arabidopsis thaliana (Mouse-ear cress)).